The following is a 624-amino-acid chain: MAAGETQLYAKVSNKLKGRSTPSLLDPLLAMGFPTHTALKALAATGRKTAEAAADWLHGHCNDPSLDDPIPQEYALFLCPTGPLLEKLQEFWRESRRQCAKNRAHEVFPHVTLCDFFTCEDQKVECLYEALRRAGDRILGSFPTLVPLVLHSSISYLGFFINDSPADAIREFAMAFATEAAVLADCTIKPCTKQLHLTLAHKFYPHHQRTLEQLAKAIQPSHSCQWTAALYSRDMRFVHYQTLKALFQYKPQNADELMLSAGDYIFVDPTQQEEASEGWAIGISHRTGCRGFLPENYTERANEADTWVKHRTYTFNLAMDLNSRKDFEASCRGNGEPHTPSMSKSVSSIQALQATISRRGILVVRHGERVDQVFGKSWLQQCTTADGKYYRPDLNFPRSLPRRSNGIKDFENDPPLSSCGIFQARLAGEALLDSGVRVTAVFASPALRCVQTAKHILEELKLEKKLKIRVEPGIFEWMKWEASKATLTFLTLEELKEANFNVDLDYRPALPRCSLMPAESYDQYVERCAVSMGQIINTCPQDMGITLIVSHSSALDSCTRPLLGLPPRECGDFAQLVRKIPSLGMCFCEENREDGKWDLVNPPVKTLTHGANSVFNWRNWISSN.

Positions 19 to 60 constitute a UBA domain; the sequence is RSTPSLLDPLLAMGFPTHTALKALAATGRKTAEAAADWLHGH. The region spanning 238–303 is the SH3 domain; it reads VHYQTLKALF…PENYTERANE (66 aa). Residues 358 to 624 are phosphatase-like; the sequence is RRGILVVRHG…FNWRNWISSN (267 aa).

As to quaternary structure, homodimer or homooligomer. Interacts with CBL. Part of a complex containing CBL and activated EGFR. Interacts with ubiquitin and with mono-ubiquitinated proteins. Interacts with dynamin.

Its subcellular location is the cytoplasm. It is found in the nucleus. In terms of biological role, interferes with CBL-mediated down-regulation and degradation of receptor-type tyrosine kinases. Promotes accumulation of activated target receptors, such as T-cell receptors, EGFR and PDGFRB, on the cell surface. May inhibit dynamin-dependent endocytic pathways by functionally sequestering dynamin via its SH3 domain. Exhibits negligible protein tyrosine phosphatase activity at neutral pH. May act as a dominant-negative regulator of UBASH3B-dependent dephosphorylation. The sequence is that of Ubiquitin-associated and SH3 domain-containing protein A (Ubash3a) from Mus musculus (Mouse).